We begin with the raw amino-acid sequence, 86 residues long: MEKNKTRIGHVISDRMEKTIVVGIDVAKRHPLYKKTYRRTMKYLVHDEKNEAKIGDMIEIVKCRPISKGKYWRLNRIITKGHIVAA.

Belongs to the universal ribosomal protein uS17 family. Part of the 30S ribosomal subunit.

In terms of biological role, one of the primary rRNA binding proteins, it binds specifically to the 5'-end of 16S ribosomal RNA. This Dehalococcoides mccartyi (strain ATCC BAA-2266 / KCTC 15142 / 195) (Dehalococcoides ethenogenes (strain 195)) protein is Small ribosomal subunit protein uS17.